The sequence spans 296 residues: Ribosomal RNA small subunit methyltransferase A (296 aa).

Residues Asn-30, Leu-32, Gly-57, Glu-78, Asp-103, and Asn-128 each coordinate S-adenosyl-L-methionine.

Belongs to the class I-like SAM-binding methyltransferase superfamily. rRNA adenine N(6)-methyltransferase family. RsmA subfamily.

The protein localises to the cytoplasm. It catalyses the reaction adenosine(1518)/adenosine(1519) in 16S rRNA + 4 S-adenosyl-L-methionine = N(6)-dimethyladenosine(1518)/N(6)-dimethyladenosine(1519) in 16S rRNA + 4 S-adenosyl-L-homocysteine + 4 H(+). In terms of biological role, specifically dimethylates two adjacent adenosines (A1518 and A1519) in the loop of a conserved hairpin near the 3'-end of 16S rRNA in the 30S particle. May play a critical role in biogenesis of 30S subunits. In Staphylococcus haemolyticus (strain JCSC1435), this protein is Ribosomal RNA small subunit methyltransferase A.